The following is a 490-amino-acid chain: Delta(14)-sterol reductase (490 aa).

7 consecutive transmembrane segments (helical) span residues 23-43 (FGGP…VHVF), 80-100 (VFGL…ALSL), 136-156 (LAIL…WTFI), 160-180 (FAQI…FVYV), 230-250 (EFME…AFIA), 255-275 (LYGY…FYVF), and 324-344 (QLGA…YSIF). NADP(+)-binding positions include Lys351, Arg355, Ile378, Trp383, and 390–391 (NY). The chain crosses the membrane as a helical span at residues 436–456 (ARGWGIVFTYFYILYFAILLI). NADP(+) is bound by residues Asp462, 466-470 (CSKKY), and Tyr477.

The protein belongs to the ERG4/ERG24 family.

Its subcellular location is the membrane. The enzyme catalyses 4,4-dimethyl-5alpha-cholesta-8,24-dien-3beta-ol + NADP(+) = 4,4-dimethyl-5alpha-cholesta-8,14,24-trien-3beta-ol + NADPH + H(+). It participates in steroid biosynthesis; zymosterol biosynthesis; zymosterol from lanosterol: step 2/6. Functionally, reduces the C14=C15 double bond of 4,4-dimethyl-cholesta-8,14,24-trienol to produce 4,4-dimethyl-cholesta-8,24-dienol. In Neurospora crassa (strain ATCC 24698 / 74-OR23-1A / CBS 708.71 / DSM 1257 / FGSC 987), this protein is Delta(14)-sterol reductase (erg-3).